We begin with the raw amino-acid sequence, 408 residues long: tRNA wybutosine-synthesizing protein 2 homolog (408 aa).

S-adenosyl-L-methionine-binding positions include Ser201, Lys208, Glu248, and 276–277 (DN).

The protein belongs to the class I-like SAM-binding methyltransferase superfamily. TRM5/TYW2 family.

The catalysed reaction is 4-demethylwyosine(37) in tRNA(Phe) + S-adenosyl-L-methionine = 4-demethyl-7-[(3S)-3-amino-3-carboxypropyl]wyosine(37) in tRNA(Phe) + S-methyl-5'-thioadenosine + H(+). Its pathway is tRNA modification; wybutosine-tRNA(Phe) biosynthesis. Its function is as follows. S-adenosyl-L-methionine-dependent transferase that acts as a component of the wybutosine biosynthesis pathway. Wybutosine is a hyper modified guanosine with a tricyclic base found at the 3'-position adjacent to the anticodon of eukaryotic phenylalanine tRNA. Catalyzes the transfer of the alpha-amino-alpha-carboxypropyl (acp) group from S-adenosyl-L-methionine to the C-7 position of 4-demethylwyosine (imG-14) to produce wybutosine-86. The polypeptide is tRNA wybutosine-synthesizing protein 2 homolog (trmt12) (Danio rerio (Zebrafish)).